We begin with the raw amino-acid sequence, 267 residues long: L-aspartate dehydrogenase 2 (267 aa).

NAD(+) contacts are provided by Ala-123 and Asn-189. His-219 is an active-site residue.

It belongs to the L-aspartate dehydrogenase family.

The enzyme catalyses L-aspartate + NADP(+) + H2O = oxaloacetate + NH4(+) + NADPH + H(+). The catalysed reaction is L-aspartate + NAD(+) + H2O = oxaloacetate + NH4(+) + NADH + H(+). It participates in cofactor biosynthesis; NAD(+) biosynthesis; iminoaspartate from L-aspartate (dehydrogenase route): step 1/1. Its function is as follows. Specifically catalyzes the NAD or NADP-dependent dehydrogenation of L-aspartate to iminoaspartate. The chain is L-aspartate dehydrogenase 2 from Bordetella bronchiseptica (strain ATCC BAA-588 / NCTC 13252 / RB50) (Alcaligenes bronchisepticus).